The following is a 465-amino-acid chain: MSEAVPLSTPGASHAGAATDRAPVLDIDSLDMEARGVGRAVDENGEPGKVIFVEGALPGERVTYSSFRRKPTYEQAQVVDILRPSVMRTRPKCAFFGTCGGCSMQHLDMRAQVAIKQRVLEDNLWHLAKLRAEAMFAPIHGPSWGYRYRARLTVRHVAKKGGVLVGFHEKKSSYVADMTSCEVLPPHVSAMLVPLRRLVEQLSIRDRMPQIELAVGSQVTALVLRVLEPINAADETLLREFADAHRVQFWLQPKGPDTVAPFYPLDVQLDYTLPEFGIRMPFKPTDFTQVNHQINRVLVGRALRLLAPERGDRVLDLFCGIGNFTLPLARLAREVVGIEGSETLTSRALANAKENGVDGHTSFASRNLFEVTADDLHALGAFDKFLVDPPREGALAVSKALAEIAQSGEGPLPARIVYVSCNPSTLARDAGLLVHEAGYRLKGAGVVNMFPHTSHVESIALFERD.

The interval 1–20 (MSEAVPLSTPGASHAGAATD) is disordered. The 69-residue stretch at 12 to 80 (ASHAGAATDR…PTYEQAQVVD (69 aa)) folds into the TRAM domain. [4Fe-4S] cluster contacts are provided by Cys93, Cys99, Cys102, and Cys181. Residues Gln289, Phe318, Asn323, Glu339, Asn367, and Asp388 each contribute to the S-adenosyl-L-methionine site. Cys421 serves as the catalytic Nucleophile.

Belongs to the class I-like SAM-binding methyltransferase superfamily. RNA M5U methyltransferase family. RlmD subfamily.

The catalysed reaction is uridine(1939) in 23S rRNA + S-adenosyl-L-methionine = 5-methyluridine(1939) in 23S rRNA + S-adenosyl-L-homocysteine + H(+). Functionally, catalyzes the formation of 5-methyl-uridine at position 1939 (m5U1939) in 23S rRNA. The sequence is that of 23S rRNA (uracil(1939)-C(5))-methyltransferase RlmD from Burkholderia thailandensis (strain ATCC 700388 / DSM 13276 / CCUG 48851 / CIP 106301 / E264).